A 525-amino-acid polypeptide reads, in one-letter code: ATP synthase subunit alpha (525 aa).

171–178 (GDRQTGKS) contributes to the ATP binding site.

This sequence belongs to the ATPase alpha/beta chains family. As to quaternary structure, F-type ATPases have 2 components, CF(1) - the catalytic core - and CF(0) - the membrane proton channel. CF(1) has five subunits: alpha(3), beta(3), gamma(1), delta(1), epsilon(1). CF(0) has three main subunits: a(1), b(2) and c(9-12). The alpha and beta chains form an alternating ring which encloses part of the gamma chain. CF(1) is attached to CF(0) by a central stalk formed by the gamma and epsilon chains, while a peripheral stalk is formed by the delta and b chains.

It is found in the cell inner membrane. It carries out the reaction ATP + H2O + 4 H(+)(in) = ADP + phosphate + 5 H(+)(out). Functionally, produces ATP from ADP in the presence of a proton gradient across the membrane. The alpha chain is a regulatory subunit. The polypeptide is ATP synthase subunit alpha (Flavobacterium johnsoniae (strain ATCC 17061 / DSM 2064 / JCM 8514 / BCRC 14874 / CCUG 350202 / NBRC 14942 / NCIMB 11054 / UW101) (Cytophaga johnsonae)).